A 137-amino-acid polypeptide reads, in one-letter code: MPTINQLVRKGRKSRTSKSDAPALNFGYNSMKKKATDNPAPQKRGVATRVGTMTPKKPNSALRKYARVRLSNLIEVTAYIPGIGHNLQEHSVVLIRGGRVKDLPGVRYHVIRGALDTAGVDGRMQSRSKYGTKRPKK.

Residues 1–44 (MPTINQLVRKGRKSRTSKSDAPALNFGYNSMKKKATDNPAPQKR) form a disordered region. Aspartate 102 bears the 3-methylthioaspartic acid mark.

It belongs to the universal ribosomal protein uS12 family. As to quaternary structure, part of the 30S ribosomal subunit. Contacts proteins S8 and S17. May interact with IF1 in the 30S initiation complex.

In terms of biological role, with S4 and S5 plays an important role in translational accuracy. Its function is as follows. Interacts with and stabilizes bases of the 16S rRNA that are involved in tRNA selection in the A site and with the mRNA backbone. Located at the interface of the 30S and 50S subunits, it traverses the body of the 30S subunit contacting proteins on the other side and probably holding the rRNA structure together. The combined cluster of proteins S8, S12 and S17 appears to hold together the shoulder and platform of the 30S subunit. The polypeptide is Small ribosomal subunit protein uS12 (Latilactobacillus sakei subsp. sakei (strain 23K) (Lactobacillus sakei subsp. sakei)).